An 856-amino-acid polypeptide reads, in one-letter code: Alginate lyase 7 (856 aa).

PbH1 repeat units lie at residues 133–155 (DYNV…DPHE), 157–179 (TINL…VADF), 180–202 (QIGA…NIVT), 204–226 (SHDI…VVQR), 234–256 (VYNV…LIKM), 257–279 (STDV…RVQG), 280–304 (VEDV…EVIV), and 320–342 (TQNV…GIQE). Hemolysin-type calcium-binding repeat units follow at residues 387-402 (GSTG…IADL), 404-421 (VGGS…NDVL), 422-439 (EGGA…ADIF), 538-549 (GTEGDDSLTGNA), 554-563 (LDGGSGNDSL), 565-581 (GGLG…DDIL), 582-599 (NGGL…ADIF), 715-731 (GGAG…DDIL), and 733-749 (GGSE…ADVF).

It belongs to the D-mannuronate C5-epimerase family. Ca(2+) is required as a cofactor.

The protein resides in the secreted. The catalysed reaction is Eliminative cleavage of alginate to give oligosaccharides with 4-deoxy-alpha-L-erythro-hex-4-enuronosyl groups at their non-reducing ends and beta-D-mannuronate at their reducing end.. It carries out the reaction [(1-&gt;4)-beta-D-mannuronosyl](n) = [alginate](n). It participates in glycan biosynthesis; alginate biosynthesis. With respect to regulation, inhibited by zinc. Functionally, converts beta-D-mannuronic acid (M) to alpha-L-guluronic acid (G). Has both epimerase and lyase activities. Contributes to abortive encystment by degrading the coat from inside the cyst. Important for cyst germination. This is Alginate lyase 7 from Azotobacter vinelandii.